The following is a 2032-amino-acid chain: Cytoskeleton-associated protein 5 (2032 aa).

2 TOG regions span residues 1-223 and 268-502; these read MGDD…KLPT and YELL…LIHG. Lysine 48 carries the post-translational modification N6-acetyllysine. HEAT repeat units follow at residues 159-197, 356-394, and 434-472; these read IILLKPIIKVLPKLFESREKAVRDEAKLIAVEIYRWIRD, GQYAGHVVPTILEKFKEKKPQVVQALQEAIDAIFLTTTL, and KSLLKPFCAALLKHINDSAPEVRDAAFEALGTALKVVGE. Residues 516–579 form a disordered region; it reads PLPGRTAASG…GTKNKKGLET (64 aa). The segment covering 543–554 has biased composition (low complexity); that stretch reads LKKAPAAKAGGP. Residues 588 to 817 form a TOG 3 region; the sequence is SIEVCEEKAS…EFEKMQGQSP (230 aa). The HEAT 4 repeat unit spans residues 750–788; that stretch reads GLNVKAFISNVKTALAATNPAVRTAAITLLGVMYLYVGP. A disordered region spans residues 811–851; that stretch reads KMQGQSPPAPTRGISKHSTSGTDEGEDGDEPDDGSNDVVDL. Serine 816 and serine 845 each carry phosphoserine. Positions 833-845 are enriched in acidic residues; the sequence is DEGEDGDEPDDGS. 2 TOG regions span residues 853 to 1081 and 1193 to 1428; these read PRTE…VNMP and IEQL…KRPS. HEAT repeat units lie at residues 855–893, 936–974, and 1013–1051; these read TEISDKITSELVSKIGDKNWKIRKEGLDEVAGIINDAKF, KQHVKNLGIPIITVLGDSKNNVRAAALATVNAWAEQTGM, and PTDLILCVPHLYSCLEDRNGDVRKKAQDALPFFMMHLGY. The segment at 1077–1160 is disordered; the sequence is KVNMPAKPAP…KEDEDKSGPI (84 aa). HEAT repeat units lie at residues 1284–1322, 1324–1357, and 1361–1399; these read ENEASSFIPYLVVKVGEPKDVIRKDVRAILNRMCLVYPA, KMFPFIMEGTKSKNSKQRAECLEELGCLVESYGM, and QPTPGKALKEIAVHIGDRDNAVRNAALNTIVTVYNVHGD. The interval 1422–1443 is disordered; the sequence is RSAKRPSAAPIKQVEEKPQRAQ. Serine 1469 bears the Phosphoserine mark. Positions 1801-1822 are disordered; that stretch reads SMDQTGSKSDKETEKGASRIDE. The segment covering 1808 to 1822 has biased composition (basic and acidic residues); the sequence is KSDKETEKGASRIDE. Serine 1861 bears the Phosphoserine mark. An interaction with TACC3 region spans residues 1932 to 1957; the sequence is PSVYLERLKILRQRCGLDNTKQDDRP. The segment at 1949–2032 is disordered; the sequence is DNTKQDDRPP…RLERIKSSRK (84 aa). The segment covering 1971-1983 has biased composition (polar residues); sequence VASSTDMLHSKLS. Residues 1984 to 1997 show a composition bias toward basic and acidic residues; it reads QLRESREQHQHSDL. Residues 2002–2014 are compositionally biased toward low complexity; that stretch reads THSSGTVTSSSST. Over residues 2018 to 2032 the composition is skewed to basic and acidic residues; it reads DDLKKRLERIKSSRK.

Belongs to the TOG/XMAP215 family. In terms of assembly, interacts with TACC1. Interacts with SLAIN2 and SLAIN1. Interacts with HNRNPA2B1. Interacts with TACC3 independently of clathrin. Interacts with TACC3 and clathrin forming the TACC3/ch-TOG/clathrin complex located at spindle inter-microtubules bridges. Interacts with NDC80; indicative for an association with the NDC80 complex. As to expression, overexpressed in hepatomas and colonic tumors. Also expressed in skeletal muscle, brain, heart, placenta, lung, liver, kidney and pancreas. Expression is elevated in the brain; highly expressed in the Purkinje cell bodies of the cerebellum.

It is found in the cytoplasm. The protein localises to the cytoskeleton. It localises to the microtubule organizing center. Its subcellular location is the centrosome. The protein resides in the spindle pole. It is found in the spindle. The protein localises to the chromosome. It localises to the centromere. Its subcellular location is the kinetochore. In terms of biological role, binds to the plus end of microtubules and regulates microtubule dynamics and microtubule organization. Acts as a processive microtubule polymerase. Promotes cytoplasmic microtubule nucleation and elongation. Plays a major role in organizing spindle poles. In spindle formation protects kinetochore microtubules from depolymerization by KIF2C and has an essential role in centrosomal microtubule assembly independently of KIF2C activity. Contributes to centrosome integrity. Acts as a component of the TACC3/ch-TOG/clathrin complex proposed to contribute to stabilization of kinetochore fibers of the mitotic spindle by acting as inter-microtubule bridge. The TACC3/ch-TOG/clathrin complex is required for the maintenance of kinetochore fiber tension. Enhances the strength of NDC80 complex-mediated kinetochore-tip microtubule attachments. The chain is Cytoskeleton-associated protein 5 (CKAP5) from Homo sapiens (Human).